The sequence spans 354 residues: Elongation factor Ts (354 aa).

Residues 81 to 84 (TDFV) form an involved in Mg(2+) ion dislocation from EF-Tu region.

This sequence belongs to the EF-Ts family.

Its subcellular location is the cytoplasm. Associates with the EF-Tu.GDP complex and induces the exchange of GDP to GTP. It remains bound to the aminoacyl-tRNA.EF-Tu.GTP complex up to the GTP hydrolysis stage on the ribosome. In Campylobacter curvus (strain 525.92), this protein is Elongation factor Ts.